The chain runs to 403 residues: S-adenosylmethionine synthase (403 aa).

His-17 lines the ATP pocket. Asp-19 is a binding site for Mg(2+). A K(+)-binding site is contributed by Glu-45. L-methionine contacts are provided by Glu-58 and Gln-104. The interval Gln-104–Thr-114 is flexible loop. Residues Asp-179–Lys-181, Lys-250–Phe-251, Asp-259, Arg-265–Lys-266, Ala-282, and Lys-286 contribute to the ATP site. Residue Asp-259 participates in L-methionine binding. Residue Lys-290 coordinates L-methionine.

The protein belongs to the AdoMet synthase family. In terms of assembly, homotetramer; dimer of dimers. Mg(2+) is required as a cofactor. Requires K(+) as cofactor.

It is found in the cytoplasm. It carries out the reaction L-methionine + ATP + H2O = S-adenosyl-L-methionine + phosphate + diphosphate. Its pathway is amino-acid biosynthesis; S-adenosyl-L-methionine biosynthesis; S-adenosyl-L-methionine from L-methionine: step 1/1. Catalyzes the formation of S-adenosylmethionine (AdoMet) from methionine and ATP. The overall synthetic reaction is composed of two sequential steps, AdoMet formation and the subsequent tripolyphosphate hydrolysis which occurs prior to release of AdoMet from the enzyme. This Mycobacterium ulcerans (strain Agy99) protein is S-adenosylmethionine synthase.